The following is a 283-amino-acid chain: Thymidylate synthase (283 aa).

Arg22 provides a ligand contact to dUMP. The active-site Nucleophile is Cys160. Residues 180 to 183, Asn191, and 221 to 223 each bind dUMP; these read RSCD and HIY. Residue Asp183 participates in (6R)-5,10-methylene-5,6,7,8-tetrahydrofolate binding. Ser282 is a binding site for (6R)-5,10-methylene-5,6,7,8-tetrahydrofolate.

It belongs to the thymidylate synthase family. Bacterial-type ThyA subfamily. As to quaternary structure, homodimer.

Its subcellular location is the cytoplasm. The catalysed reaction is dUMP + (6R)-5,10-methylene-5,6,7,8-tetrahydrofolate = 7,8-dihydrofolate + dTMP. It functions in the pathway pyrimidine metabolism; dTTP biosynthesis. Its function is as follows. Catalyzes the reductive methylation of 2'-deoxyuridine-5'-monophosphate (dUMP) to 2'-deoxythymidine-5'-monophosphate (dTMP) while utilizing 5,10-methylenetetrahydrofolate (mTHF) as the methyl donor and reductant in the reaction, yielding dihydrofolate (DHF) as a by-product. This enzymatic reaction provides an intracellular de novo source of dTMP, an essential precursor for DNA biosynthesis. This chain is Thymidylate synthase, found in Haemophilus influenzae (strain 86-028NP).